The chain runs to 528 residues: Gamma-taxilin (528 aa).

Basic and acidic residues predominate over residues 1-10 (MATRVEEAAR). Positions 1 to 36 (MATRVEEAARGRGGGAEEATEAGRGGRRRSPRQKFE) are disordered. 2 positions are modified to omega-N-methylarginine: Arg12 and Arg24. 4 positions are modified to phosphoserine: Ser79, Ser86, Ser97, and Ser105. The segment at 102 to 130 (TQESREEIPGGEARTDPPDGQQDSECNRN) is disordered. Basic and acidic residues predominate over residues 104–118 (ESREEIPGGEARTDP). A coiled-coil region spans residues 153–464 (EEKLAALCKK…LKEQVSIKAA (312 aa)). Position 283 is a phosphotyrosine (Tyr283). Positions 486-528 (HKELNTSSKRALGAHLEAEPKSQRSAVQKPPSTGSAPAIESVD) are disordered. Over residues 508 to 520 (QRSAVQKPPSTGS) the composition is skewed to polar residues. At Ser517 the chain carries Phosphoserine.

This sequence belongs to the taxilin family. Binds to the C-terminal coiled coil region of syntaxin family members STX1A, STX3A and STX4A. Forms a heterodimer with ATF4 in osteoblasts. Ubiquitously expressed. Expressed at high level in heart and skeletal muscle. Expressed in brain, placenta, lung, liver, kidney and pancreas.

The protein localises to the nucleus membrane. It is found in the cytoplasm. Its subcellular location is the cytosol. Its function is as follows. May be involved in intracellular vesicle traffic. Inhibits ATF4-mediated transcription, possibly by dimerizing with ATF4 to form inactive dimers that cannot bind DNA. May be involved in regulating bone mass density through an ATF4-dependent pathway. May be involved in cell cycle progression. The protein is Gamma-taxilin (TXLNG) of Homo sapiens (Human).